We begin with the raw amino-acid sequence, 141 residues long: Hemoglobin subunit alpha-A (141 aa).

The region spanning 1–141 is the Globin domain; that stretch reads VLSAADKANV…VGAVLTAKYR (141 aa). Residue histidine 58 coordinates O2. Histidine 87 is a heme b binding site.

Belongs to the globin family. Heterotetramer of two alpha chains and two beta chains. In terms of tissue distribution, red blood cells.

Involved in oxygen transport from the lung to the various peripheral tissues. This chain is Hemoglobin subunit alpha-A (HBAA), found in Chloephaga melanoptera (Andean goose).